Reading from the N-terminus, the 1038-residue chain is Bone morphogenetic protein receptor type-2 (1038 aa).

The N-terminal stretch at 1 to 26 (MTSSLHRPFRVPWLLWAVLLVSTTAA) is a signal peptide. Over 27–150 (SQNQERLCAF…PPHSFNRDET (124 aa)) the chain is Extracellular. Disulfide bonds link cysteine 34–cysteine 66, cysteine 60–cysteine 84, cysteine 94–cysteine 117, cysteine 99–cysteine 116, and cysteine 118–cysteine 123. N-linked (GlcNAc...) asparagine glycosylation is present at asparagine 55. An N-linked (GlcNAc...) asparagine glycan is attached at asparagine 110. Asparagine 126 is a glycosylation site (N-linked (GlcNAc...) asparagine). The chain crosses the membrane as a helical span at residues 151–171 (IIIALASVSVLAVLIVALCFG). The Cytoplasmic segment spans residues 172–1038 (YRMLTGDRKQ…VSKDIGMNCL (867 aa)). The 302-residue stretch at 203-504 (LKLLELIGRG…QCAEERMAEL (302 aa)) folds into the Protein kinase domain. ATP-binding positions include 209 to 217 (IGRGRYGAV), lysine 230, and 280 to 282 (EYY). Catalysis depends on aspartate 333, which acts as the Proton acceptor. ATP is bound by residues 337 to 338 (RN) and aspartate 351. Threonine 379 is subject to Phosphothreonine. The residue at position 586 (serine 586) is a Phosphoserine. Positions 593 to 626 (QAQARIPSPETSVTSLSTNTTTTNTTGLTPSTGM) are disordered. Positions 603-626 (TSVTSLSTNTTTTNTTGLTPSTGM) are enriched in low complexity. Residues serine 680 and serine 681 each carry the phosphoserine modification. Positions 746–769 (PKQQNLPKRPTSLPLNTKNSTKEP) are disordered. Phosphoserine is present on serine 843. A compositionally biased stretch (basic and acidic residues) spans 872 to 896 (RREQQAGHDEGVLDRLVDRRERPLE). The segment at 872–974 (RREQQAGHDE…SGSGEKIKRR (103 aa)) is disordered. 2 stretches are compositionally biased toward polar residues: residues 909 to 924 (PCSEQDILTQGVTSTA) and 937 to 964 (RPNSLDLSATNILDGSSIQIGESTQDGK).

The protein belongs to the protein kinase superfamily. TKL Ser/Thr protein kinase family. TGFB receptor subfamily. As to quaternary structure, interacts with GDF5. Interacts with BMP4. Interacts with SCUBE3. Interacts with TSC22D1/TSC-22. Interacts with activin A/INHBA. Requires Mg(2+) as cofactor. Mn(2+) is required as a cofactor.

It is found in the cell membrane. The catalysed reaction is L-threonyl-[receptor-protein] + ATP = O-phospho-L-threonyl-[receptor-protein] + ADP + H(+). It carries out the reaction L-seryl-[receptor-protein] + ATP = O-phospho-L-seryl-[receptor-protein] + ADP + H(+). On ligand binding, forms a receptor complex consisting of two type II and two type I transmembrane serine/threonine kinases. Type II receptors phosphorylate and activate type I receptors which autophosphorylate, then bind and activate SMAD transcriptional regulators. Can also mediate signaling through the activation of the p38MAPK cascade. Binds to BMP7, BMP2 and, less efficiently, BMP4. Binding is weak but enhanced by the presence of type I receptors for BMPs. Mediates induction of adipogenesis by GDF6. Promotes signaling also by binding to activin A/INHBA. In Mus musculus (Mouse), this protein is Bone morphogenetic protein receptor type-2 (Bmpr2).